The chain runs to 426 residues: Serine--tRNA ligase (426 aa).

231 to 233 contributes to the L-serine binding site; sequence TAE. 262-264 is a binding site for ATP; that stretch reads RSE. An L-serine-binding site is contributed by Glu285. ATP is bound at residue 349 to 352; the sequence is EISS. Position 385 (Ser385) interacts with L-serine.

Belongs to the class-II aminoacyl-tRNA synthetase family. Type-1 seryl-tRNA synthetase subfamily. Homodimer. The tRNA molecule binds across the dimer.

The protein localises to the cytoplasm. It catalyses the reaction tRNA(Ser) + L-serine + ATP = L-seryl-tRNA(Ser) + AMP + diphosphate + H(+). The catalysed reaction is tRNA(Sec) + L-serine + ATP = L-seryl-tRNA(Sec) + AMP + diphosphate + H(+). It functions in the pathway aminoacyl-tRNA biosynthesis; selenocysteinyl-tRNA(Sec) biosynthesis; L-seryl-tRNA(Sec) from L-serine and tRNA(Sec): step 1/1. Catalyzes the attachment of serine to tRNA(Ser). Is also able to aminoacylate tRNA(Sec) with serine, to form the misacylated tRNA L-seryl-tRNA(Sec), which will be further converted into selenocysteinyl-tRNA(Sec). This is Serine--tRNA ligase from Saccharophagus degradans (strain 2-40 / ATCC 43961 / DSM 17024).